A 1480-amino-acid chain; its full sequence is Cystic fibrosis transmembrane conductance regulator (1480 aa).

The Cytoplasmic portion of the chain corresponds to 1–77 (MQRSPLEKAS…KLINALRRCF (77 aa)). A helical transmembrane segment spans residues 78–98 (FWRFMFYGIFLYLGEVTKAVQ). The 285-residue stretch at 81-365 (FMFYGIFLYL…WAVQTWYDSL (285 aa)) folds into the ABC transmembrane type-1 1 domain. Residues 99–122 (PLLLGRIIASYDPDNKEERSIAIY) are Extracellular-facing. Residues 123–146 (LGIGLCLLFIVRTLLLHPAIFGLH) form a helical membrane-spanning segment. The Cytoplasmic portion of the chain corresponds to 147–195 (HIGMQMRIAMFSLIYKKTLKLSSRVLDKISIGQLVSLLSNNLNKFDEGL). A helical transmembrane segment spans residues 196-216 (ALAHFVWIAPLQVALLMGLIW). At 217-222 (ELLQAS) the chain is on the extracellular side. A helical transmembrane segment spans residues 223-243 (AFCGLGFLIVLALFQAGLGRM). Residues 244 to 298 (MMKYRDQRAGKINERLVITSEMIENIQSVKAYCWEEAMEKMIENLRQTELKLTRK) lie on the Cytoplasmic side of the membrane. The chain crosses the membrane as a helical span at residues 299–319 (AAYVRYFNSSAFFFSGFFVVF). The Extracellular portion of the chain corresponds to 320 to 339 (LSVLPYALIKGIVLRKIFTT). The helical transmembrane segment at 340–358 (ISFCIVLRMAVTRQFPWAV) threads the bilayer. Topologically, residues 359–858 (QTWYDSLGAI…YLRYITVHKS (500 aa)) are cytoplasmic. ATP is bound by residues W401, S434, 458–465 (GSTGAGKT), and Q493. The ABC transporter 1 domain occupies 423–646 (NGDDSLFFSN…RPDFSSKLMG (224 aa)). C524 carries the S-palmitoyl cysteine lipid modification. Phosphoserine occurs at positions 549 and 660. The segment at 654 to 831 (SAERRNSILT…EEINEEDLKE (178 aa)) is disordered R region. A Phosphoserine; by PKA modification is found at S670. Residue K688 forms a Glycyl lysine isopeptide (Lys-Gly) (interchain with G-Cter in ubiquitin) linkage. 2 positions are modified to phosphoserine: S700 and S712. T717 is subject to Phosphothreonine. Residues S737, S753, S768, S790, S795, and S813 each carry the phosphoserine modification. The chain crosses the membrane as a helical span at residues 859-879 (LIFVLIWCLVIFLAEVAASLV). Residues 859–1155 (LIFVLIWCLV…AVNSSIDVDS (297 aa)) form the ABC transmembrane type-1 2 domain. The Extracellular segment spans residues 880–918 (VLWLLGNTPLQDKGNSTHSRNNSYAVIITSTSSYYVFYI). Residues N894 and N900 are each glycosylated (N-linked (GlcNAc...) asparagine). Residues 919 to 939 (YVGVADTLLAMGFFRGLPLVH) traverse the membrane as a discontinuously helical segment. Residues 940–990 (TLITVSKILHNKMLHSVLQAPMSTLNTLKAGGILNRFSKDIAILDDLLPLT) lie on the Cytoplasmic side of the membrane. A helical membrane pass occupies residues 991 to 1011 (IFDFIQLLLIVIGAIAVVAVL). The Extracellular portion of the chain corresponds to 1012–1013 (QP). Residues 1014–1034 (YIFVATVPVIVAFIMLRAYFL) traverse the membrane as a helical segment. Over 1035–1095 (QTSQQLKQLE…TANWFLYLST (61 aa)) the chain is Cytoplasmic. Residues 1096-1116 (LRWFQMRIEMIFVIFFIAVTF) form a helical membrane-spanning segment. At 1117–1130 (ISILTTGEGEGRVG) the chain is on the extracellular side. The helical transmembrane segment at 1131–1151 (IILTLAMNIMSTLQWAVNSSI) threads the bilayer. The Cytoplasmic segment spans residues 1152 to 1480 (DVDSLMRSVS…TEEEVQDTRL (329 aa)). The ABC transporter 2 domain occupies 1210–1443 (MTVKDLTAKY…RSLFQQAISP (234 aa)). Residues Y1219 and 1244–1251 (GRTGSGKS) each bind ATP. Residues 1386 to 1480 (RTLKQAFADC…TEEEVQDTRL (95 aa)) form an interaction with GORASP2 region. The S-palmitoyl cysteine moiety is linked to residue C1395. Phosphoserine is present on residues S1444 and S1456. Residues 1452 to 1480 (HRNSSKCKSKPQIAALKEETEEEVQDTRL) are disordered. A compositionally biased stretch (acidic residues) spans 1470–1480 (ETEEEVQDTRL). The short motif at 1478 to 1480 (TRL) is the PDZ-binding element.

It belongs to the ABC transporter superfamily. ABCC family. CFTR transporter (TC 3.A.1.202) subfamily. In terms of assembly, monomer; does not require oligomerization for channel activity. May form oligomers in the membrane. Interacts with SLC26A3, SLC26A6 and NHERF1. Interacts with SHANK2. Interacts with MYO6. Interacts (via C-terminus) with GOPC (via PDZ domain); this promotes CFTR internalization and thereby decreases channel activity. Interacts with SLC4A7 through NHERF1. Found in a complex with MYO5B and RAB11A. Interacts with ANO1. Interacts with SLC26A8. Interacts with AHCYL1; the interaction increases CFTR activity. Interacts with CSE1L. The core-glycosylated form interacts with GORASP2 (via PDZ GRASP-type 1 domain) in respone to ER stress. Interacts with MARCHF2; the interaction leads to CFTR ubiqtuitination and degradation. Interacts with ADGRG2. Post-translationally, N-glycosylated. Phosphorylated; cAMP treatment promotes phosphorylation and activates the channel. Dephosphorylation decreases the ATPase activity (in vitro). Phosphorylation at PKA sites activates the channel. Phosphorylation at PKC sites enhances the response to phosphorylation by PKA. Phosphorylated by AMPK; this inhibits channel activity. In terms of processing, ubiquitinated, leading to its degradation in the lysosome. Deubiquitination by USP10 in early endosomes enhances its endocytic recycling to the cell membrane. Ubiquitinated by RNF185 during ER stress. Ubiquitinated by MARCHF2.

The protein resides in the apical cell membrane. It localises to the early endosome membrane. Its subcellular location is the cell membrane. The protein localises to the recycling endosome membrane. It is found in the endoplasmic reticulum membrane. The protein resides in the nucleus. It carries out the reaction ATP + H2O + closed Cl(-) channel = ADP + phosphate + open Cl(-) channel.. The catalysed reaction is chloride(in) = chloride(out). The enzyme catalyses hydrogencarbonate(in) = hydrogencarbonate(out). It catalyses the reaction ATP + H2O = ADP + phosphate + H(+). Functionally, epithelial ion channel that plays an important role in the regulation of epithelial ion and water transport and fluid homeostasis. Mediates the transport of chloride ions across the cell membrane. Possesses an intrinsic ATPase activity and utilizes ATP to gate its channel; the passive flow of anions through the channel is gated by cycles of ATP binding and hydrolysis by the ATP-binding domains. The ion channel is also permeable to HCO(3)(-); selectivity depends on the extracellular chloride concentration. Exerts its function also by modulating the activity of other ion channels and transporters. Contributes to the regulation of the pH and the ion content of the epithelial fluid layer. Modulates the activity of the epithelial sodium channel (ENaC) complex, in part by regulating the cell surface expression of the ENaC complex. May regulate bicarbonate secretion and salvage in epithelial cells by regulating the transporter SLC4A7. Can inhibit the chloride channel activity of ANO1. Plays a role in the chloride and bicarbonate homeostasis during sperm epididymal maturation and capacitation. The chain is Cystic fibrosis transmembrane conductance regulator from Pongo abelii (Sumatran orangutan).